Consider the following 253-residue polypeptide: Ribosomal RNA small subunit methyltransferase A (253 aa).

6 residues coordinate S-adenosyl-L-methionine: histidine 12, leucine 14, glycine 39, glutamate 60, aspartate 81, and asparagine 104.

The protein belongs to the class I-like SAM-binding methyltransferase superfamily. rRNA adenine N(6)-methyltransferase family. RsmA subfamily.

It localises to the cytoplasm. The enzyme catalyses adenosine(1518)/adenosine(1519) in 16S rRNA + 4 S-adenosyl-L-methionine = N(6)-dimethyladenosine(1518)/N(6)-dimethyladenosine(1519) in 16S rRNA + 4 S-adenosyl-L-homocysteine + 4 H(+). Its function is as follows. Specifically dimethylates two adjacent adenosines (A1518 and A1519) in the loop of a conserved hairpin near the 3'-end of 16S rRNA in the 30S particle. May play a critical role in biogenesis of 30S subunits. The sequence is that of Ribosomal RNA small subunit methyltransferase A from Acidovorax ebreus (strain TPSY) (Diaphorobacter sp. (strain TPSY)).